We begin with the raw amino-acid sequence, 290 residues long: 4-hydroxy-tetrahydrodipicolinate synthase (290 aa).

Thr44 contacts pyruvate. Catalysis depends on Tyr132, which acts as the Proton donor/acceptor. The Schiff-base intermediate with substrate role is filled by Lys160. A pyruvate-binding site is contributed by Ile202.

The protein belongs to the DapA family. Homotetramer; dimer of dimers.

The protein localises to the cytoplasm. It catalyses the reaction L-aspartate 4-semialdehyde + pyruvate = (2S,4S)-4-hydroxy-2,3,4,5-tetrahydrodipicolinate + H2O + H(+). The protein operates within amino-acid biosynthesis; L-lysine biosynthesis via DAP pathway; (S)-tetrahydrodipicolinate from L-aspartate: step 3/4. Functionally, catalyzes the condensation of (S)-aspartate-beta-semialdehyde [(S)-ASA] and pyruvate to 4-hydroxy-tetrahydrodipicolinate (HTPA). The protein is 4-hydroxy-tetrahydrodipicolinate synthase of Alkaliphilus oremlandii (strain OhILAs) (Clostridium oremlandii (strain OhILAs)).